The primary structure comprises 525 residues: Glutamyl-tRNA(Gln) amidotransferase subunit A, mitochondrial (525 aa).

Catalysis depends on charge relay system residues Lys-76 and Ser-168. The active-site Acyl-ester intermediate is the Ser-192.

This sequence belongs to the amidase family. GatA subfamily. In terms of assembly, subunit of the heterotrimeric GatCAB amidotransferase (AdT) complex, composed of A (QRSL1), B (GATB) and C (GATC) subunits.

It is found in the mitochondrion. It carries out the reaction L-glutamyl-tRNA(Gln) + L-glutamine + ATP + H2O = L-glutaminyl-tRNA(Gln) + L-glutamate + ADP + phosphate + H(+). In terms of biological role, allows the formation of correctly charged Gln-tRNA(Gln) through the transamidation of misacylated Glu-tRNA(Gln) in the mitochondria. The reaction takes place in the presence of glutamine and ATP through an activated gamma-phospho-Glu-tRNA(Gln). The sequence is that of Glutamyl-tRNA(Gln) amidotransferase subunit A, mitochondrial (Qrsl1) from Rattus norvegicus (Rat).